A 495-amino-acid chain; its full sequence is Aspartyl/glutamyl-tRNA(Asn/Gln) amidotransferase subunit B (495 aa).

The protein belongs to the GatB/GatE family. GatB subfamily. As to quaternary structure, heterotrimer of A, B and C subunits.

It catalyses the reaction L-glutamyl-tRNA(Gln) + L-glutamine + ATP + H2O = L-glutaminyl-tRNA(Gln) + L-glutamate + ADP + phosphate + H(+). The catalysed reaction is L-aspartyl-tRNA(Asn) + L-glutamine + ATP + H2O = L-asparaginyl-tRNA(Asn) + L-glutamate + ADP + phosphate + 2 H(+). Its function is as follows. Allows the formation of correctly charged Asn-tRNA(Asn) or Gln-tRNA(Gln) through the transamidation of misacylated Asp-tRNA(Asn) or Glu-tRNA(Gln) in organisms which lack either or both of asparaginyl-tRNA or glutaminyl-tRNA synthetases. The reaction takes place in the presence of glutamine and ATP through an activated phospho-Asp-tRNA(Asn) or phospho-Glu-tRNA(Gln). In Rippkaea orientalis (strain PCC 8801 / RF-1) (Cyanothece sp. (strain PCC 8801)), this protein is Aspartyl/glutamyl-tRNA(Asn/Gln) amidotransferase subunit B.